The chain runs to 256 residues: E3 ubiquitin-protein ligase MIR2 (256 aa).

Topologically, residues 1–83 (MASKDVEEGV…NLWPEMERQE (83 aa)) are cytoplasmic. The RING-CH-type zinc-finger motif lies at 7–66 (EEGVEGPICWICREEVGNEGIHPCACTGELDVVHPQCLSTWLTVSRNTACQMCRVIYRTR). Positions 15, 18, 30, 32, 40, 43, 56, and 59 each coordinate Zn(2+). A helical membrane pass occupies residues 84-104 (IFELFLLMSVVVAGLVGVALC). Residues 105–124 (TWTLLVILTAPAGTFSPGAV) are Extracellular-facing. The chain crosses the membrane as a helical span at residues 125–145 (LGFLCFFGFYQIFIVFAFGGI). Residues 146–256 (CRVSGTVRAL…VRKNHPKNNG (111 aa)) lie on the Cytoplasmic side of the membrane. Positions 179 to 256 (DNIELTVLVG…VRKNHPKNNG (78 aa)) are disordered. Residues 193 to 203 (TDEEPTDESSE) show a composition bias toward acidic residues. Basic residues predominate over residues 245-256 (KPVRKNHPKNNG).

In terms of assembly, binds human MHC-I, CD86, ICAM1 and CD1D.

The protein localises to the host cell membrane. Its subcellular location is the host endoplasmic reticulum. The catalysed reaction is S-ubiquitinyl-[E2 ubiquitin-conjugating enzyme]-L-cysteine + [acceptor protein]-L-lysine = [E2 ubiquitin-conjugating enzyme]-L-cysteine + N(6)-ubiquitinyl-[acceptor protein]-L-lysine.. Its pathway is protein modification; protein ubiquitination. Functionally, membrane-bound E3 ubiquitin ligase expressed at the immediate early stage of viral reactivation to mediate polyubiquitination of various host membrane proteins related to the immune response. Promotes ubiquitination and subsequent degradation of host MHC-I, CD86, DC-SIGN and DC-SIGNR, ICAM1 and CD1D molecules, presumably to prevent lysis of infected cells by cytotoxic T-lymphocytes and NK cell. Plays a role in the down-regulation of the host stress-induced NKG2D ligands MICA, MICB and CLEC2B, which enable immune cells expressing the NKG2D receptor to recognize and annihilate infected cells prior to viral spread. Alters monocyte metabolism and proliferation by mediating rapid internalization of cellular growth factor-binding receptor tyrosine kinases from the surface leading to increased signaling. The polypeptide is E3 ubiquitin-protein ligase MIR2 (K5) (Homo sapiens (Human)).